Consider the following 950-residue polypeptide: MSLTELFNRHEFLARHIGPSDAERAEMLAAVGAPSIDALVDQTLPADIRLNRRLDLPSPQPEAEALAALKAVASKNVVNKSFIGLGYYPVLTPTVILRNVLENPGWYTAYTPYQAEIAQGRLEALLNFQQMVIDLTGLEMANASLLDEATAAAEAMAMAGRVSKSKSTRFFVDSRVLPQTLDVMKTRAKYFGFELVQGHPEEAGNGDYFGALFQYPGEAGDLLDLTPHIAAVKAKGGVVAVAADVMALVALKSPAEMGADIALGNTQRFGVPMGFGGPHAAYFAFKDEMKRSAPGRIIGVSIDAKGKTALRMALQTREQHIRREKANSNICTSQVLLANIAGLYAVYHGAEGVRRIAARIHRLAAIFAHAVKEAGGKLVFDRFFDTVQVDAPKADAIYAAALAAGYNLRRVGKTVLGVAFHEAATESDLAKLIELFTGKPADIAALDAAALDAIPAALKRESAILTHPVFNTHHSEHEMLRYMKKLENRDLAMNHSMISLGSCTMKLNATSEMIPITWPEFANMHPFAPREQTVGYLELIEGLQKQLKAITGFDAISMQPNSGAQGEYAGLLAISRYHESRGEAHRNICLIPQSAHGTNPATAQMMNMQVVVVKCDEAGNVDVADLKAKAEQHAANLAALMITYPSTHGVFEQGIKEICEIVHAHGGQVYMDGANLNAQVGLTRPADIGADVSHMNLHKTFCIPHGGGGPGMGPIGLKAHLAPFIANHVVAPVPGAVEGQTAVSAAPFGSASILPISYMYIAMMGAEGMKQATENALLSANYLATRLSEHFPVLYTGANGRVAHECIIDLRPLKAASGVTEVDVAKRLMDYGFHAPTMSFPVPGTLMIEPTESEPKAELDRFIAAMAAIRAEIDRVQSGAWPADNNPLVNAPHSKADIAGDWDRPYSREQGLFPLPYVLENKFWPSVNRIDDVYGDRNVVCSCPSTESYM.

Residue Lys699 is modified to N6-(pyridoxal phosphate)lysine.

It belongs to the GcvP family. In terms of assembly, the glycine cleavage system is composed of four proteins: P, T, L and H. The cofactor is pyridoxal 5'-phosphate.

It catalyses the reaction N(6)-[(R)-lipoyl]-L-lysyl-[glycine-cleavage complex H protein] + glycine + H(+) = N(6)-[(R)-S(8)-aminomethyldihydrolipoyl]-L-lysyl-[glycine-cleavage complex H protein] + CO2. Functionally, the glycine cleavage system catalyzes the degradation of glycine. The P protein binds the alpha-amino group of glycine through its pyridoxal phosphate cofactor; CO(2) is released and the remaining methylamine moiety is then transferred to the lipoamide cofactor of the H protein. The chain is Glycine dehydrogenase (decarboxylating) from Chromobacterium violaceum (strain ATCC 12472 / DSM 30191 / JCM 1249 / CCUG 213 / NBRC 12614 / NCIMB 9131 / NCTC 9757 / MK).